The following is a 62-amino-acid chain: Photosystem II reaction center protein Z (62 aa).

2 helical membrane-spanning segments follow: residues 8-28 (SVFALIILSFLLVIGVPVVLA) and 41-61 (FSGASLWIGLVFLVGILNSFI).

This sequence belongs to the PsbZ family. As to quaternary structure, PSII is composed of 1 copy each of membrane proteins PsbA, PsbB, PsbC, PsbD, PsbE, PsbF, PsbH, PsbI, PsbJ, PsbK, PsbL, PsbM, PsbT, PsbY, PsbZ, Psb30/Ycf12, at least 3 peripheral proteins of the oxygen-evolving complex and a large number of cofactors. It forms dimeric complexes.

The protein localises to the plastid. Its subcellular location is the chloroplast thylakoid membrane. Its function is as follows. May control the interaction of photosystem II (PSII) cores with the light-harvesting antenna, regulates electron flow through the 2 photosystem reaction centers. PSII is a light-driven water plastoquinone oxidoreductase, using light energy to abstract electrons from H(2)O, generating a proton gradient subsequently used for ATP formation. In Staurastrum punctulatum (Green alga), this protein is Photosystem II reaction center protein Z.